The chain runs to 197 residues: Xanthine phosphoribosyltransferase (197 aa).

Residues L20 and N27 each contribute to the xanthine site. 128–132 contacts 5-phospho-alpha-D-ribose 1-diphosphate; the sequence is ANGQA. Residue K156 participates in xanthine binding.

It belongs to the purine/pyrimidine phosphoribosyltransferase family. Xpt subfamily. Homodimer.

Its subcellular location is the cytoplasm. The enzyme catalyses XMP + diphosphate = xanthine + 5-phospho-alpha-D-ribose 1-diphosphate. The protein operates within purine metabolism; XMP biosynthesis via salvage pathway; XMP from xanthine: step 1/1. Functionally, converts the preformed base xanthine, a product of nucleic acid breakdown, to xanthosine 5'-monophosphate (XMP), so it can be reused for RNA or DNA synthesis. The polypeptide is Xanthine phosphoribosyltransferase (Bacillus cereus (strain G9842)).